A 98-amino-acid polypeptide reads, in one-letter code: ATP synthase subunit alpha, chloroplastic (98 aa).

Belongs to the ATPase alpha/beta chains family. F-type ATPases have 2 components, CF(1) - the catalytic core - and CF(0) - the membrane proton channel. CF(1) has five subunits: alpha(3), beta(3), gamma(1), delta(1), epsilon(1). CF(0) has four main subunits: a, b, b' and c.

Its subcellular location is the plastid. The protein localises to the chloroplast thylakoid membrane. The enzyme catalyses ATP + H2O + 4 H(+)(in) = ADP + phosphate + 5 H(+)(out). Its function is as follows. Produces ATP from ADP in the presence of a proton gradient across the membrane. The alpha chain is a regulatory subunit. In Populus euphratica (Euphrates poplar), this protein is ATP synthase subunit alpha, chloroplastic (atpA).